The following is a 545-amino-acid chain: T-complex protein 1 subunit gamma (545 aa).

Methionine 1 carries the post-translational modification N-acetylmethionine. The disordered stretch occupies residues 1-24 (MMGHRPVLVLSQNTKRESGRKVQS). Phosphoserine is present on serine 11. A Glycyl lysine isopeptide (Lys-Gly) (interchain with G-Cter in SUMO2) cross-link involves residue lysine 15. Glycine 42 contributes to the ADP binding site. Glycine 42 is a binding site for ATP. Aspartate 93 contacts Mg(2+). Positions 94, 95, 96, 97, 162, and 163 each coordinate ADP. ATP contacts are provided by glycine 94, threonine 95, and threonine 96. Serine 170 carries the phosphoserine modification. Lysine 222 carries the post-translational modification N6-acetyllysine. 2 positions are modified to phosphoserine: serine 243 and serine 244. Tyrosine 247 is subject to Phosphotyrosine. Glycyl lysine isopeptide (Lys-Gly) (interchain with G-Cter in SUMO2) cross-links involve residues lysine 248 and lysine 249. The residue at position 252 (serine 252) is a Phosphoserine. Cysteine 366 and cysteine 372 are joined by a disulfide. Lysine 381 is covalently cross-linked (Glycyl lysine isopeptide (Lys-Gly) (interchain with G-Cter in SUMO2)). Glycine 411 lines the ADP pocket. Position 411 (glycine 411) interacts with ATP. Phosphothreonine occurs at positions 430 and 459. The ADP site is built by glycine 482, glutamate 483, glutamate 497, and lysine 502. Glycine 482 is an ATP binding site. Glutamate 497 contributes to the ATP binding site. The segment at 526–545 (HKKKGDDQSRQGGAPDAGQE) is disordered.

Belongs to the TCP-1 chaperonin family. In terms of assembly, component of the chaperonin-containing T-complex (TRiC), a hexadecamer composed of two identical back-to-back stacked rings enclosing a protein folding chamber. Each ring is made up of eight different subunits: TCP1/CCT1, CCT2, CCT3, CCT4, CCT5, CCT6A/CCT6, CCT7, CCT8. Interacts with PACRG. Interacts with DNAAF4. Interacts with DLEC1.

The protein resides in the cytoplasm. The enzyme catalyses ATP + H2O = ADP + phosphate + H(+). Functionally, component of the chaperonin-containing T-complex (TRiC), a molecular chaperone complex that assists the folding of actin, tubulin and other proteins upon ATP hydrolysis. The TRiC complex mediates the folding of WRAP53/TCAB1, thereby regulating telomere maintenance. As part of the TRiC complex may play a role in the assembly of BBSome, a complex involved in ciliogenesis regulating transports vesicles to the cilia. This chain is T-complex protein 1 subunit gamma (CCT3), found in Homo sapiens (Human).